A 605-amino-acid polypeptide reads, in one-letter code: MAYIDQKHNTFWDDFAIALRDKIVFLNSTWGEIHASAHRFEDLSALAFDEAEEMIYFSDQTHQNGSIFALRRDDSTPIVVQRTGNDSVEGLAYDPLNRNLFWADMRQQKIFFSSVDTLATELPKVLVDLSGEGGQPDGIAVDICRRQLYWTNGNIKSASVERIGLDGKGRQTIISADIDMPRGIVVDQLSDRIFWVDNKVGIFFAIESARLDGSDRQVVVKGKHQDPKHLAINEDAIYWTDRMDKAVWSYPKPTYSQEVTNVTQAEPELAKPFSKEKAYGIVTRTGFYQRLQKDAHCASIVKKVKQQLNTRLNNRTHIRSAEGDRISQLEREHCLNGASFMSRGEFCICPVGFKGARCEISECHNYCVHGTCEISDAGFPKCYCQAEFYGERCEYHKCNGHCLNSGHCSMDKESDAMRCECRPNFGGERCEHNLTEQCAIYCQHPETQLPVSCLDFCEEWSNSNDTATITEYQTAGQCGPAPPVQGPLIIVIVLGLVTTSGLVALTVHGVRLIYKPKRPRIKKTFVVRKQARLNSSSDTPLTNRPLTTEQCEITIENCCNMNICETPCFDPKLVEQTFSSRDRKAPCVKEDKKILIHSMEDNLLS.

Residues methionine 1–glycine 31 form the signal peptide. N-linked (GlcNAc...) asparagine glycosylation is found at asparagine 27, asparagine 64, and asparagine 85. The Extracellular segment spans residues glutamate 32–glycine 486. LDL-receptor class B repeat units lie at residues glutamate 53–asparagine 97, arginine 98–arginine 145, arginine 146–serine 190, and aspartate 191–alanine 236. 2 N-linked (GlcNAc...) asparagine glycosylation sites follow: asparagine 261 and asparagine 314. 2 consecutive EGF-like domains span residues glutamate 322–glutamate 359 and glutamate 394–glutamate 431. 5 cysteine pairs are disulfide-bonded: cysteine 334–cysteine 347, cysteine 349–cysteine 358, cysteine 398–cysteine 408, cysteine 402–cysteine 419, and cysteine 421–cysteine 430. Asparagine 433 and asparagine 464 each carry an N-linked (GlcNAc...) asparagine glycan. A helical membrane pass occupies residues proline 487–valine 507. Residues histidine 508–serine 605 are Cytoplasmic-facing.

Belongs to the cueball family.

The protein resides in the cell membrane. Its function is as follows. Has a role in spermatogenesis and oogenesis. The protein is Protein cueball of Drosophila grimshawi (Hawaiian fruit fly).